The primary structure comprises 366 residues: Phospho-N-acetylmuramoyl-pentapeptide-transferase (366 aa).

A run of 10 helical transmembrane segments spans residues 27–47 (AAMF…IASL), 71–91 (TPTM…LLWA), 93–113 (LSNV…AIGF), 134–154 (LAIE…AAKI), 174–194 (ALLN…VSAG), 205–225 (GLAI…AYLA), 245–265 (LAVI…FNAP), 268–288 (AIFM…TVAV), 294–314 (IVMV…IIQV), and 343–363 (QVVI…LATL).

Belongs to the glycosyltransferase 4 family. MraY subfamily. The cofactor is Mg(2+).

Its subcellular location is the cell inner membrane. The enzyme catalyses UDP-N-acetyl-alpha-D-muramoyl-L-alanyl-gamma-D-glutamyl-meso-2,6-diaminopimeloyl-D-alanyl-D-alanine + di-trans,octa-cis-undecaprenyl phosphate = di-trans,octa-cis-undecaprenyl diphospho-N-acetyl-alpha-D-muramoyl-L-alanyl-D-glutamyl-meso-2,6-diaminopimeloyl-D-alanyl-D-alanine + UMP. Its pathway is cell wall biogenesis; peptidoglycan biosynthesis. In terms of biological role, catalyzes the initial step of the lipid cycle reactions in the biosynthesis of the cell wall peptidoglycan: transfers peptidoglycan precursor phospho-MurNAc-pentapeptide from UDP-MurNAc-pentapeptide onto the lipid carrier undecaprenyl phosphate, yielding undecaprenyl-pyrophosphoryl-MurNAc-pentapeptide, known as lipid I. In Allorhizobium ampelinum (strain ATCC BAA-846 / DSM 112012 / S4) (Agrobacterium vitis (strain S4)), this protein is Phospho-N-acetylmuramoyl-pentapeptide-transferase.